The primary structure comprises 83 residues: Cell division topological specificity factor (83 aa).

Belongs to the MinE family.

Prevents the cell division inhibition by proteins MinC and MinD at internal division sites while permitting inhibition at polar sites. This ensures cell division at the proper site by restricting the formation of a division septum at the midpoint of the long axis of the cell. The protein is Cell division topological specificity factor of Alcanivorax borkumensis (strain ATCC 700651 / DSM 11573 / NCIMB 13689 / SK2).